A 124-amino-acid polypeptide reads, in one-letter code: Small ribosomal subunit protein uS12 (124 aa).

The tract at residues 1-32 (MPTINQLVRKGRRDKTAKVKTAALKGSPQRRG) is disordered. Asp-89 bears the 3-methylthioaspartic acid mark. The segment at 104–124 (TQGVKGRKQARSRYGAKKEKS) is disordered. The segment covering 108-118 (KGRKQARSRYG) has biased composition (basic residues).

It belongs to the universal ribosomal protein uS12 family. Part of the 30S ribosomal subunit. Contacts proteins S8 and S17. May interact with IF1 in the 30S initiation complex.

With S4 and S5 plays an important role in translational accuracy. Functionally, interacts with and stabilizes bases of the 16S rRNA that are involved in tRNA selection in the A site and with the mRNA backbone. Located at the interface of the 30S and 50S subunits, it traverses the body of the 30S subunit contacting proteins on the other side and probably holding the rRNA structure together. The combined cluster of proteins S8, S12 and S17 appears to hold together the shoulder and platform of the 30S subunit. The protein is Small ribosomal subunit protein uS12 of Rhodococcus erythropolis (strain PR4 / NBRC 100887).